The sequence spans 348 residues: NADH-quinone oxidoreductase subunit H (348 aa).

Helical transmembrane passes span 25–45 (ILFL…VAAL), 95–115 (FMFI…FAII), 128–148 (IGIL…MFGG), 168–188 (ISYE…TGSF), 204–224 (WNIF…VAVT), 254–274 (FFIG…CLFF), 287–307 (ILPP…MFVL), and 327–347 (VCLP…LISA).

This sequence belongs to the complex I subunit 1 family. NDH-1 is composed of 14 different subunits. Subunits NuoA, H, J, K, L, M, N constitute the membrane sector of the complex.

It is found in the cell inner membrane. It catalyses the reaction a quinone + NADH + 5 H(+)(in) = a quinol + NAD(+) + 4 H(+)(out). In terms of biological role, NDH-1 shuttles electrons from NADH, via FMN and iron-sulfur (Fe-S) centers, to quinones in the respiratory chain. The immediate electron acceptor for the enzyme in this species is believed to be ubiquinone. Couples the redox reaction to proton translocation (for every two electrons transferred, four hydrogen ions are translocated across the cytoplasmic membrane), and thus conserves the redox energy in a proton gradient. This subunit may bind ubiquinone. The polypeptide is NADH-quinone oxidoreductase subunit H (Psychrobacter sp. (strain PRwf-1)).